The chain runs to 444 residues: Phosphoglucosamine mutase (444 aa).

Ser-102 acts as the Phosphoserine intermediate in catalysis. 4 residues coordinate Mg(2+): Ser-102, Asp-241, Asp-243, and Asp-245. Position 102 is a phosphoserine (Ser-102).

This sequence belongs to the phosphohexose mutase family. Mg(2+) serves as cofactor. Post-translationally, activated by phosphorylation.

The enzyme catalyses alpha-D-glucosamine 1-phosphate = D-glucosamine 6-phosphate. Catalyzes the conversion of glucosamine-6-phosphate to glucosamine-1-phosphate. In Acidovorax sp. (strain JS42), this protein is Phosphoglucosamine mutase.